The primary structure comprises 608 residues: Dihydroxy-acid dehydratase, chloroplastic (608 aa).

Residues 1 to 34 constitute a chloroplast transit peptide; sequence MQATIFSPRATLFPCKPLLPSHNVNSRRPSIISC. S35 is modified (N-acetylserine). C100 contacts [2Fe-2S] cluster. D132 contacts Mg(2+). [2Fe-2S] cluster is bound at residue C173. Residue D174 participates in Mg(2+) binding. Residue C245 participates in [2Fe-2S] cluster binding. E497 is a binding site for Mg(2+). The Proton acceptor role is filled by S523.

It belongs to the IlvD/Edd family. It depends on [2Fe-2S] cluster as a cofactor. Mg(2+) is required as a cofactor.

It is found in the plastid. The protein resides in the chloroplast. The enzyme catalyses (2R)-2,3-dihydroxy-3-methylbutanoate = 3-methyl-2-oxobutanoate + H2O. It carries out the reaction (2R,3R)-2,3-dihydroxy-3-methylpentanoate = (S)-3-methyl-2-oxopentanoate + H2O. Its pathway is amino-acid biosynthesis; L-isoleucine biosynthesis; L-isoleucine from 2-oxobutanoate: step 3/4. It functions in the pathway amino-acid biosynthesis; L-valine biosynthesis; L-valine from pyruvate: step 3/4. Is highly competitively inhibited by the fungal sesquiterpenoid aspterric acid, which is effective as a herbicide in spray applications. Its function is as follows. Functions in the biosynthesis of branched-chain amino acids. Catalyzes the dehydration of (2R,3R)-2,3-dihydroxy-3-methylpentanoate (2,3-dihydroxy-3-methylvalerate) into 2-oxo-3-methylpentanoate (2-oxo-3-methylvalerate) and of (2R)-2,3-dihydroxy-3-methylbutanoate (2,3-dihydroxyisovalerate) into 2-oxo-3-methylbutanoate (2-oxoisovalerate), the penultimate precursor to L-isoleucine and L-valine, respectively. The chain is Dihydroxy-acid dehydratase, chloroplastic from Arabidopsis thaliana (Mouse-ear cress).